A 272-amino-acid polypeptide reads, in one-letter code: HMP-PP phosphatase (272 aa).

Asp-8 functions as the Nucleophile in the catalytic mechanism. Mg(2+)-binding residues include Asp-8, Asp-10, and Asp-212.

Belongs to the HAD-like hydrolase superfamily. Cof family. Mg(2+) is required as a cofactor.

The enzyme catalyses 4-amino-2-methyl-5-(diphosphooxymethyl)pyrimidine + H2O = 4-amino-2-methyl-5-(phosphooxymethyl)pyrimidine + phosphate + H(+). Catalyzes the hydrolysis of 4-amino-2-methyl-5-hydroxymethylpyrimidine pyrophosphate (HMP-PP) to 4-amino-2-methyl-5-hydroxymethylpyrimidine phosphate (HMP-P). The polypeptide is HMP-PP phosphatase (Escherichia coli O6:H1 (strain CFT073 / ATCC 700928 / UPEC)).